A 245-amino-acid chain; its full sequence is Orotidine 5'-phosphate decarboxylase (245 aa).

Substrate contacts are provided by residues aspartate 22, lysine 44, 71–80, threonine 131, arginine 192, glutamine 201, glycine 221, and arginine 222; that span reads DLKFHDIPNT. Residue lysine 73 is the Proton donor of the active site.

This sequence belongs to the OMP decarboxylase family. Type 1 subfamily. As to quaternary structure, homodimer.

The enzyme catalyses orotidine 5'-phosphate + H(+) = UMP + CO2. Its pathway is pyrimidine metabolism; UMP biosynthesis via de novo pathway; UMP from orotate: step 2/2. Its function is as follows. Catalyzes the decarboxylation of orotidine 5'-monophosphate (OMP) to uridine 5'-monophosphate (UMP). This Yersinia pseudotuberculosis serotype O:3 (strain YPIII) protein is Orotidine 5'-phosphate decarboxylase.